Here is a 393-residue protein sequence, read N- to C-terminus: Beta-ureidopropionase (393 aa).

In terms of domain architecture, CN hydrolase spans 72–344; that stretch reads VRVGLVQNRI…DGLLVTELNL (273 aa). Catalysis depends on glutamate 119, which acts as the Proton acceptor. The Proton donor role is filled by lysine 196. The active-site Nucleophile is cysteine 233. A Phosphoserine modification is found at serine 378.

This sequence belongs to the carbon-nitrogen hydrolase superfamily. BUP family. As to quaternary structure, homodimer, homotetramer, homooctamer; can also form higher homooligomers.

Its subcellular location is the cytoplasm. It catalyses the reaction 3-(carbamoylamino)propanoate + H2O + 2 H(+) = beta-alanine + NH4(+) + CO2. It carries out the reaction 3-(carbamoylamino)-2-methylpropanoate + H2O + 2 H(+) = (R)-3-amino-2-methylpropanoate + NH4(+) + CO2. The protein operates within amino-acid biosynthesis; beta-alanine biosynthesis. Its function is as follows. Catalyzes a late step in pyrimidine degradation. Converts N-carbamoyl-beta-alanine (3-ureidopropanoate) into beta-alanine, ammonia and carbon dioxide. Likewise, converts N-carbamoyl-beta-aminoisobutyrate (3-ureidoisobutyrate) into beta-aminoisobutyrate, ammonia and carbon dioxide. This Mus musculus (Mouse) protein is Beta-ureidopropionase (Upb1).